Reading from the N-terminus, the 184-residue chain is Protein GrpE (184 aa).

The protein belongs to the GrpE family. Homodimer.

It is found in the cytoplasm. Functionally, participates actively in the response to hyperosmotic and heat shock by preventing the aggregation of stress-denatured proteins, in association with DnaK and GrpE. It is the nucleotide exchange factor for DnaK and may function as a thermosensor. Unfolded proteins bind initially to DnaJ; upon interaction with the DnaJ-bound protein, DnaK hydrolyzes its bound ATP, resulting in the formation of a stable complex. GrpE releases ADP from DnaK; ATP binding to DnaK triggers the release of the substrate protein, thus completing the reaction cycle. Several rounds of ATP-dependent interactions between DnaJ, DnaK and GrpE are required for fully efficient folding. This chain is Protein GrpE, found in Pseudomonas putida (strain GB-1).